A 235-amino-acid chain; its full sequence is Auracyanin-B (235 aa).

Residues 1–21 (MSWRGSGRSNFRSRSSSNGGS) show a composition bias toward low complexity. 2 disordered regions span residues 1 to 27 (MSWR…SGGS) and 64 to 107 (ATPR…NVVN). A signal peptide spans 1 to 56 (MSWRGSGRSNFRSRSSSNGGSTFSGGSAGGPPLIVMMGLAFGAGLIMLIVMIASNA). A propeptide spanning residues 57 to 80 (TAGGFVAATPRPTATPRPTAAPAP) is cleaved from the precursor. The segment covering 69–86 (TATPRPTAAPAPTQPPAA) has biased composition (pro residues). The segment covering 87–100 (QPTTAPATQAANAP) has biased composition (low complexity). One can recognise a Plastocyanin-like domain in the interval 111–235 (AQTVEVRAAP…GMKGTLTVTP (125 aa)). Histidine 152, cysteine 217, histidine 222, and methionine 227 together coordinate Cu cation.

The protein belongs to the multicopper oxidase family. Cu cation serves as cofactor. Glycosylated.

Its subcellular location is the cell membrane. Its function is as follows. Probably a soluble electron acceptor for the integral membrane protein electron transfer alternative complex III (ACIII). The chain is Auracyanin-B from Chloroflexus aurantiacus (strain ATCC 29366 / DSM 635 / J-10-fl).